Here is a 394-residue protein sequence, read N- to C-terminus: Phosphopentomutase (394 aa).

Residues Asp15, Asp288, His293, Asp329, His330, and His341 each coordinate Mn(2+).

This sequence belongs to the phosphopentomutase family. Mn(2+) serves as cofactor.

It is found in the cytoplasm. The catalysed reaction is 2-deoxy-alpha-D-ribose 1-phosphate = 2-deoxy-D-ribose 5-phosphate. The enzyme catalyses alpha-D-ribose 1-phosphate = D-ribose 5-phosphate. The protein operates within carbohydrate degradation; 2-deoxy-D-ribose 1-phosphate degradation; D-glyceraldehyde 3-phosphate and acetaldehyde from 2-deoxy-alpha-D-ribose 1-phosphate: step 1/2. Functionally, isomerase that catalyzes the conversion of deoxy-ribose 1-phosphate (dRib-1-P) and ribose 1-phosphate (Rib-1-P) to deoxy-ribose 5-phosphate (dRib-5-P) and ribose 5-phosphate (Rib-5-P), respectively. In Bacillus licheniformis (strain ATCC 14580 / DSM 13 / JCM 2505 / CCUG 7422 / NBRC 12200 / NCIMB 9375 / NCTC 10341 / NRRL NRS-1264 / Gibson 46), this protein is Phosphopentomutase.